The primary structure comprises 1135 residues: MASEEASLRALESLMSEFFHNGTSNERKREIESLLNNFAQQLGAWRFCFYFLSQSQNDYVLMYSLSVFENMINKMWLGVPSQEKMEIRNSLPKLLLSQHKSLPSFICNKLCKVIVDMGRQDWPMFYHDFFTNILQLIQTPSTTPLGLIMLKTASEELACPREDLIVARKEELRKLLLEQVPTVLDLLTGVLESIWDKHSITAATPPPSPTASDTDDLLSNLIHTPNLTKQLSQPPPSLEAESERVCALALECLSHLFSWIPLSASITPSLLTTIFQFARLGCDARSRQTNSVTTNTTASVVNGRSSSPPTAPARDLARLGVLAMSCINELMCKNCVPLEFQEYLLRVCQQTFYLLQRITRETNAHSVRSRFEELDESYVEKFTDFLRLFVSVHLRRIESNAQFPLLEFLTLLFKYTFHQPTREGYLSCLDIWAQFLDYLTNKIRNRLEDRDAIIGRYEDALVLLLNEVLNRIQFRYNQTQLEELDDETLDDDQQTEWQRYLRHSLEVVAKIMDLLPTHAFSKLFAALQENLNVYLGLQRCLVTNGNDQRLNVTAENDCRRLHCSLRDLSSLLQAVGRLAEYFIGDMFGARFNDALTVVERLVEVTLYGSRIKLYNMETAVPSVLKPDLIDVHAQSLAALQAYSHWLARYYSEVQRQNPEQFISIISTAMEALPPLISTKVQEKLLLSACHLLVSIATTVRPMFLLNIPSVQKVFSRVTDSSAQRLPEEAQVLLCRALSNVLLLPWPNVPEGEQQWAERSSHHSNLLNALTRDYRLLKGSSLPQRKGQLEATKRVICQTLGVLRDIVENISGEGTKSRQICYQSLQESAQLSLTLFPAYIHQSDVTEEMLSFFLALFQGLRVQMGAPFTEQIIQTFLNMFTREQLAESILQEGSAGCHVVEKFLKILQVVVQEPGQSFKPFLPSILSLCMEQLYPIIAERPSPDVKAELFELLFQLLHHNWRYFYRSSVLASVHRDGSDEPMENQAQFIVVMQAFGQSFLQPDIHIFRQNLSYLETLNSKHKLYHKKLFQTGMLPQFVSVLLQVLIHKSHDLLQEEIGIAVYNMASVDFSTFFSTFLPEFLTGCQGLDTSQKSVLARNFKMERDLPSFTQSVHRLVNDLRYYRLCNDSLPPGTVKL.

The Importin N-terminal domain occupies 31–97 (IESLLNNFAQ…RNSLPKLLLS (67 aa)).

It belongs to the exportin family. Expressed during meiotic maturation 2 hours after germinal vesicle break down (GVBD) and in unfertilized and fertilized eggs, but not in oocytes (at protein level). Expressed in somatic cells, in oocytes, during meiotic maturation and in unfertilized and fertilized eggs.

Its subcellular location is the nucleus. The protein resides in the cytoplasm. In terms of biological role, mediates the nuclear export of actin and profilin-actin complexes in somatic cells. Oocyte nuclei lack active actin export. This Xenopus laevis (African clawed frog) protein is Exportin-6-A (xpo6-a).